Here is a 130-residue protein sequence, read N- to C-terminus: NADH-ubiquinone oxidoreductase chain 1 (130 aa).

The helical transmembrane segment at 45-65 (SILFMSLFSVMFCLVVYSYLW) threads the bilayer.

It belongs to the complex I subunit 1 family.

The protein localises to the mitochondrion inner membrane. It catalyses the reaction a ubiquinone + NADH + 5 H(+)(in) = a ubiquinol + NAD(+) + 4 H(+)(out). Functionally, core subunit of the mitochondrial membrane respiratory chain NADH dehydrogenase (Complex I) that is believed to belong to the minimal assembly required for catalysis. Complex I functions in the transfer of electrons from NADH to the respiratory chain. The immediate electron acceptor for the enzyme is believed to be ubiquinone. This is NADH-ubiquinone oxidoreductase chain 1 (ND1) from Artemia salina (Brine shrimp).